Reading from the N-terminus, the 203-residue chain is Eukaryotic translation initiation factor isoform 4E (203 aa).

Residues 1 to 25 (MATETAGAVVESSSAATVPSPAPEA) show a composition bias toward low complexity. Residues 1 to 27 (MATETAGAVVESSSAATVPSPAPEAGS) are disordered. MRNA contacts are provided by residues 47–52 (QGAAWG), Lys79, and 97–98 (WE). The cysteines at positions 102 and 141 are disulfide-linked. 148–153 (RQRQDK) contacts mRNA.

The protein belongs to the eukaryotic initiation factor 4E family. In terms of assembly, EIF4F is a multi-subunit complex, the composition of which varies with external and internal environmental conditions. It is composed of at least EIF4A, EIF4E and EIF4G. EIF4E is also known to interact with other partners. In higher plants two isoforms of EIF4F have been identified, named isoform EIF4F and isoform EIF(iso)4F. Isoform EIF4F has subunits p220 and p26, whereas isoform EIF(iso)4F has subunits p82 and p28. (Microbial infection) Interacts with the potyvirus peanut stripe virus (PStV) helper component proteinase (HC-Pro) in the cytoplasm and with PStV viral genome-linked protein (VPg) in the nucleus; these interactions are possible in susceptible hosts but impaired in resistant plants. Post-translationally, according to the redox status, the Cys-102-Cys-141 disulfide bridge may have a role in regulating protein function by affecting its ability to bind capped mRNA. As to expression, expressed ubiquitously with highest levels in young leaves and roots, and lowest levels in flowers.

Its subcellular location is the cytoplasm. It localises to the nucleus. Component of the protein complex eIF4F, which is involved in the recognition of the mRNA cap, ATP-dependent unwinding of 5'-terminal secondary structure and recruitment of mRNA to the ribosome. Recognizes and binds the 7-methylguanosine-containing mRNA cap during an early step in the initiation of protein synthesis and facilitates ribosome binding by inducing the unwinding of the mRNAs secondary structures. Key component of recessive resistance to potyviruses such as peanut stripe virus (PStV). In terms of biological role, (Microbial infection) Susceptibility host factor required for viral infection by recruiting viral RNAs to the host ribosomal complex via an interaction with viral genome-linked protein (VPg). This is Eukaryotic translation initiation factor isoform 4E from Arachis hypogaea (Peanut).